The primary structure comprises 185 residues: Large ribosomal subunit protein uL22 (185 aa).

The protein belongs to the universal ribosomal protein uL22 family. Part of the 50S ribosomal subunit.

Functionally, this protein binds specifically to 23S rRNA. It makes multiple contacts with different domains of the 23S rRNA in the assembled 50S subunit and ribosome. In terms of biological role, the globular domain of the protein is located near the polypeptide exit tunnel on the outside of the subunit, while an extended beta-hairpin is found that lines the wall of the exit tunnel in the center of the 70S ribosome. This chain is Large ribosomal subunit protein uL22, found in Pyrobaculum aerophilum (strain ATCC 51768 / DSM 7523 / JCM 9630 / CIP 104966 / NBRC 100827 / IM2).